We begin with the raw amino-acid sequence, 1299 residues long: DNA-directed RNA polymerase subunit beta' (1299 aa).

Zn(2+) contacts are provided by Cys-60, Cys-62, Cys-75, and Cys-78. The interval 385–405 (GRRGRPVTGPGNRPLKSLSDM) is disordered. Mg(2+) is bound by residues Asp-535, Asp-537, and Asp-539. The Zn(2+) site is built by Cys-886, Cys-962, Cys-969, and Cys-972.

The protein belongs to the RNA polymerase beta' chain family. As to quaternary structure, the RNAP catalytic core consists of 2 alpha, 1 beta, 1 beta' and 1 omega subunit. When a sigma factor is associated with the core the holoenzyme is formed, which can initiate transcription. The cofactor is Mg(2+). It depends on Zn(2+) as a cofactor.

The enzyme catalyses RNA(n) + a ribonucleoside 5'-triphosphate = RNA(n+1) + diphosphate. Its function is as follows. DNA-dependent RNA polymerase catalyzes the transcription of DNA into RNA using the four ribonucleoside triphosphates as substrates. This is DNA-directed RNA polymerase subunit beta' from Streptomyces coelicolor (strain ATCC BAA-471 / A3(2) / M145).